The sequence spans 239 residues: Sugar fermentation stimulation protein homolog (239 aa).

Belongs to the SfsA family.

The protein is Sugar fermentation stimulation protein homolog of Caulobacter vibrioides (strain ATCC 19089 / CIP 103742 / CB 15) (Caulobacter crescentus).